The following is a 272-amino-acid chain: Large ribosomal subunit protein uL4 (272 aa).

It belongs to the universal ribosomal protein uL4 family. As to quaternary structure, part of the 50S ribosomal subunit.

In terms of biological role, one of the primary rRNA binding proteins, this protein initially binds near the 5'-end of the 23S rRNA. It is important during the early stages of 50S assembly. It makes multiple contacts with different domains of the 23S rRNA in the assembled 50S subunit and ribosome. Forms part of the polypeptide exit tunnel. This is Large ribosomal subunit protein uL4 from Aeropyrum pernix (strain ATCC 700893 / DSM 11879 / JCM 9820 / NBRC 100138 / K1).